A 463-amino-acid chain; its full sequence is Elongation factor 1-alpha 1 (463 aa).

A tr-type G domain is found at 5–242 (KIHINIVVIG…DAILPPARPT (238 aa)). A G1 region spans residues 14 to 21 (GHVDSGKS). 14-21 (GHVDSGKS) lines the GTP pocket. The G2 stretch occupies residues 70–74 (GITID). The tract at residues 91–94 (DAPG) is G3. GTP-binding positions include 91–95 (DAPGH) and 153–156 (NKMD). Residues 153-156 (NKMD) form a G4 region. The segment at 194-196 (SGW) is G5. Residues Glu-301 and Glu-374 each carry the 5-glutamyl glycerylphosphorylethanolamine modification.

This sequence belongs to the TRAFAC class translation factor GTPase superfamily. Classic translation factor GTPase family. EF-Tu/EF-1A subfamily.

It is found in the cytoplasm. Its function is as follows. This protein promotes the GTP-dependent binding of aminoacyl-tRNA to the A-site of ribosomes during protein biosynthesis. The protein is Elongation factor 1-alpha 1 of Drosophila melanogaster (Fruit fly).